The primary structure comprises 159 residues: Ribosomal RNA large subunit methyltransferase H (159 aa).

Residues Leu-76, Gly-108, and 127-132 (FSKMTF) each bind S-adenosyl-L-methionine.

Belongs to the RNA methyltransferase RlmH family. As to quaternary structure, homodimer.

Its subcellular location is the cytoplasm. The enzyme catalyses pseudouridine(1915) in 23S rRNA + S-adenosyl-L-methionine = N(3)-methylpseudouridine(1915) in 23S rRNA + S-adenosyl-L-homocysteine + H(+). Its function is as follows. Specifically methylates the pseudouridine at position 1915 (m3Psi1915) in 23S rRNA. This Exiguobacterium sp. (strain ATCC BAA-1283 / AT1b) protein is Ribosomal RNA large subunit methyltransferase H.